The following is an 898-amino-acid chain: Endoplasmic reticulum metallopeptidase 1 (898 aa).

N-acetylmethionine is present on methionine 1. Residues 1 to 59 form a disordered region; the sequence is MEWSSESAAVRRHRGTAERREGQAAASHPQREASAQEDARGGGRMRGRTESGGESRGAK. Over 1-66 the chain is Cytoplasmic; the sequence is MEWSSESAAV…GAKTALSEAR (66 aa). The span at 37 to 57 shows a compositional bias: basic and acidic residues; sequence EDARGGGRMRGRTESGGESRG. A helical transmembrane segment spans residues 67–87; it reads TALALALYLLALRALVQLSLQ. Topologically, residues 88–393 are lumenal; it reads RLVLSRTSGL…SSSEYRHGSM (306 aa). Asparagine 176 carries N-linked (GlcNAc...) asparagine glycosylation. Cysteines 198 and 216 form a disulfide. Histidine 199 and aspartate 211 together coordinate Zn(2+). Catalysis depends on glutamate 245, which acts as the Proton acceptor. The Zn(2+) site is built by glutamate 246, glutamate 272, and histidine 348. Residues 394-414 traverse the membrane as a helical segment; that stretch reads VFFDVLGLLVIAYPSRVGSII. At 415–451 the chain is on the cytoplasmic side; sequence NYMVVMAVVLYLGRKLLRPNHSNSNYVRDFLCGLGIT. Residues 452-472 form a helical membrane-spanning segment; the sequence is FISWFTSLVTVLIIAVFVSLI. Over 473–480 the chain is Lumenal; the sequence is GQSLSWYN. The chain crosses the membrane as a helical span at residues 481-501; the sequence is YFYIAVCLYGTATVAKIILIH. The Cytoplasmic portion of the chain corresponds to 502–515; the sequence is TLAKRFYYVNASDL. Residues 516–538 traverse the membrane as a helical segment; sequence YLGELFFDTSLFVHCGFLVALTA. Residues 539-542 are Lumenal-facing; sequence QGFC. Residues 543-562 form a helical membrane-spanning segment; sequence SAFMSAVWVAFPLLTKLCVY. The Cytoplasmic portion of the chain corresponds to 563 to 573; it reads KDFKKHGAKGR. Residues 574-594 traverse the membrane as a helical segment; sequence FIALYLLGMFIPYLYGLYLIW. Topologically, residues 595-615 are lumenal; it reads AVFEMFTPILGRSGSEIPPDV. A helical membrane pass occupies residues 616–636; the sequence is VLASILAVCVMILSSYFITFI. Topologically, residues 637–645 are cytoplasmic; it reads YLVNSTKKT. Residues 646 to 666 traverse the membrane as a helical segment; that stretch reads ILTLILVCAVTFLLVCSGAFF. Residues 667–898 lie on the Lumenal side of the membrane; that stretch reads PYSSNPDSPK…WVSTYSLFVF (232 aa). An N-linked (GlcNAc...) asparagine glycan is attached at asparagine 724.

Belongs to the peptidase M28 family. It depends on Zn(2+) as a cofactor. As to expression, widely expressed, with highest levels in ovary, kidney, hypothalamus and hippocampus. Within the ovarian follicle, expressed in granulosa cells, but not in oocytes. Present in both preantral and antral follicles, but not in atretic antral follicle.

It is found in the endoplasmic reticulum membrane. In terms of biological role, within the ovary, required for the organization of somatic cells and oocytes into discrete follicular structures. This chain is Endoplasmic reticulum metallopeptidase 1, found in Rattus norvegicus (Rat).